The chain runs to 395 residues: MSSALSQASPTAPRFSVLSWPQVRRLDAILCESVPIHGRGNFPTLSCRPRDLVQVVRSRLEQKGILVHNVRLNGSAASYVLHHDSGLGYKDLDLIFMVDLKGPDAFQVVKHAVLNCLLDFLPSGVNKEKITPMTLKEAYVQKLVKVCTESDRWSLISLSNNSGKNMELKFVDSLRRQFEFSVDSFQIILDSMLMFSQCSENPMSQSFHPTVTGESMYGDFEEAMDHLRNRIIATRNPEEIRGGGLLKYCNLLVRGFRPKSEVDMKTMQRYMCSRYFIDFPDIREQQRKLKCYLQDHFVGMEDKRYDYLMTLHQVVNESTVCLMGHERRQTLALIASLAVHVLSEQNHPQAVPTFTCYYQPAPYIGEVNYNSYYFTPVQPLMSCSHSYQTWLPCCN.

It belongs to the TENT family.

It is found in the cytoplasm. It localises to the nucleus. The catalysed reaction is RNA(n) + ATP = RNA(n)-3'-adenine ribonucleotide + diphosphate. Functionally, catalyzes the transfer of one adenosine molecule from an ATP to an mRNA poly(A) tail bearing a 3'-OH terminal group in an ATP hydrolysis-dependent manner and participates in cytoplasmic polyadenylation. May be involved in maintaining the translation efficiency of at least some genes through preventing degradation of their mRNAs. In Xenopus tropicalis (Western clawed frog), this protein is Terminal nucleotidyltransferase 5B.